The following is a 214-amino-acid chain: Killer cell lectin-like receptor subfamily B member 1 (214 aa).

Topologically, residues 1 to 42 (MDAPVLYAELNLAETRGLRCTSAPSLPQDACQGPGWHRVALK) are cytoplasmic. A helical; Signal-anchor for type II membrane protein transmembrane segment spans residues 43 to 63 (LGCAGLIFLLMVLSVLVGFLV). The Extracellular portion of the chain corresponds to 64–214 (QKPLIEKCSV…WICQKTLKHV (151 aa)). The 111-residue stretch at 98-208 (HCDKCLFTSQ…CSSDNHWICQ (111 aa)) folds into the C-type lectin domain. Disulfide bonds link Cys119/Cys207 and Cys186/Cys199.

The protein resides in the membrane. The protein is Killer cell lectin-like receptor subfamily B member 1 (Klrb1) of Mus musculus (Mouse).